Here is a 240-residue protein sequence, read N- to C-terminus: MKPARVPQTVVAPDCWGDLPWGKLYRKALERQLNPWFTKMYGFHLLKIGNLSAEINCEACAVSHQVNVSAQGMPVQVQADPLHLPFADKSVDVCLLAHTLPWCTDPHRLLREADRVLIDDGWLVISGFNPISFMGLRKLVPVLRKTSPYNSRMFTLMRQLDWLSLLNFEVLHASRFHVLPWNKHGGKLLNAHIPALGCLQLIVARKRTIPLTLNPMKQSKNKPRIRQAVGATRQCRKPQA.

Residues 216–240 are disordered; the sequence is MKQSKNKPRIRQAVGATRQCRKPQA.

This is an uncharacterized protein from Escherichia coli (strain K12).